Here is a 335-residue protein sequence, read N- to C-terminus: MNTITVYEHSNFQGLHKTFTSDVPNLVNESFNDCISSVKIVGQPWILHQDINYSGQCLPLEEGEYSGISMNDGASSLRLITDDLSNPQITVYEHVNGGGKALVLTEETNLAFGNMHDNISSHRVQRGAWALYEHINRGGRCIVARAGEYLANYCTIGFNDQVSHVYPLRAGKTSVTATILWDRKKVESERNVQIDQYFYTNNTSIEQQFTATSTKEFEKYVSHSFEFSNETSIKVGTSFTLKGVVDINTEVSNTFTVKKGETESFTTRKKAELSMPVKAPPRSKLTVNFMCKEITISVPVELKIVRGSKTDIETGTYRCESGTETYIDVQSLPIS.

4 Beta/gamma crystallin 'Greek key' domains span residues 2–42 (NTIT…KIVG), 43–81 (QPWILHQDINYSGQCLPLEEGEYSGISMNDGASSLRLIT), 87–126 (PQITVYEHVNGGGKALVLTEETNLAFGNMHDNISSHRVQR), and 127–169 (GAWA…YPLR).

The protein belongs to the beta/gamma-crystallin family. As to expression, epidermis specific.

The polypeptide is Epidermal differentiation-specific protein (Cynops pyrrhogaster (Japanese fire-bellied newt)).